Consider the following 180-residue polypeptide: MTTKFEATTICAVRQNGHNAMAGDGQVTMGEKVVMKGTAHKVRRIYNDQVVVGFAGSVADAFNLEDRFEKKLNEFSGNLQRAAVELAQEWRSDQALQKLEALLIVMNKDDMLLVSGSGEVITPDNDVLAIGSGGNFALAAARAMQLHAKDMSAKEVAEAAIHIAGDIDIFTNHNVISETL.

Threonine 8 is an active-site residue. Glycine 165, aspartate 168, and threonine 171 together coordinate Na(+).

Belongs to the peptidase T1B family. HslV subfamily. A double ring-shaped homohexamer of HslV is capped on each side by a ring-shaped HslU homohexamer. The assembly of the HslU/HslV complex is dependent on binding of ATP.

It localises to the cytoplasm. It carries out the reaction ATP-dependent cleavage of peptide bonds with broad specificity.. Its activity is regulated as follows. Allosterically activated by HslU binding. Functionally, protease subunit of a proteasome-like degradation complex believed to be a general protein degrading machinery. The polypeptide is ATP-dependent protease subunit HslV (Lactiplantibacillus plantarum (strain ATCC BAA-793 / NCIMB 8826 / WCFS1) (Lactobacillus plantarum)).